Here is a 217-residue protein sequence, read N- to C-terminus: Uridylate kinase (217 aa).

6–10 is a binding site for ATP; the sequence is KLSGR. Glycine 38 is a UMP binding site. Glycine 39 and arginine 43 together coordinate ATP. Residues aspartate 60 and 107–113 contribute to the UMP site; that span reads FQPGQST. 3 residues coordinate ATP: asparagine 134, tyrosine 139, and aspartate 142.

It belongs to the UMP kinase family. In terms of assembly, homohexamer.

The protein resides in the cytoplasm. The enzyme catalyses UMP + ATP = UDP + ADP. The protein operates within pyrimidine metabolism; CTP biosynthesis via de novo pathway; UDP from UMP (UMPK route): step 1/1. Inhibited by UTP. Its function is as follows. Catalyzes the reversible phosphorylation of UMP to UDP. The chain is Uridylate kinase from Pyrobaculum neutrophilum (strain DSM 2338 / JCM 9278 / NBRC 100436 / V24Sta) (Thermoproteus neutrophilus).